The primary structure comprises 1042 residues: MAEENRKDRGVSSTVAIPSGLNRIKTRLASSGPRPEDSSDTVLKPPFNRNQKTIVPRGHGRTTGSSKQERKGTKLSRWLASYKPKYSCHPPKYACSSTTSSEEIKLRGKNSGKDEEKMIKISETNPPCSKSMGIKSFSHELGPRGGVQTPYPRPHSYNDLKELLGSLHSRFDVAKETVDKKLDVFVRDVKEAMEKMDPSCPEDREMAEQLLDVARACMEMTSAQLRATCESIVQDLTRKRKQCQAGLVKWLFSQLLFILTHCTRVVMFQKETEPIDESSFRKFKECLERIPALETDWGSTPRVDDSGSGYPEYQRNEAGQKFKRRDKESLESETALDYVVPNDHGNNAAREGYAAAKQEFPSHEPQFDSKVVEQRFYLSDEYEDKMSNEPGKELGGSDYVICRICEEEVPLFHLEPHSYICAYADKCEINCVDVDERLLKLEEILEQIIDSRSLNSFTQAGGLENSVLRKSGVASEGCSPKINEWRNKGLEGMFEDLHEMDTAFIDESYTYPIHLKSHVGAKFCHHATSSSTGSITSVSSTNTPRTSHFDSYWLERHCPEQEDLRLMMDLSDIARCGASTDFSKEGSCDYIMACMQDIQAVLKQGKLKALVIDTFGGRIEKLLCEKYLHARELTADKSSVGNIKESEDVLEHASATPQLLLKDRISIDDFEIIKPISRGAFGKVFLARKRTTGDFFAIKVLKKLDMIRKNDIERILQERNILITVRYPFLVRFFYSFTCRDNLYLVMEYLNGGDLYSLLQKVGCLDEEIARIYIAELVLALEYLHSLKIVHRDLKPDNLLIAYNGHIKLTDFGLSKIGLINNTIDLSGHESDVSPRTNSHHFQKNQEEERIRHSAVGTPDYLAPEILLGTEHGYAADWWSAGIVLFELLTGIPPFTASRPEKIFDNILNGKMPWPDVPGEMSYEAQDLINRLLVHEPEKRLGANGAAEVKSHPFFQGVDWENLALQKAAFVPQPESINDTSYFVSRFSESSCSDTETGNNSGSNPDSGDEVGIWKLHPFLSRYSICNHRIYRKLFFLLLCVF.

Basic and acidic residues-rich tracts occupy residues 1 to 10 (MAEENRKDRG), 102 to 115 (EEIK…GKDE), and 314 to 327 (QRNE…RRDK). Disordered regions lie at residues 1–75 (MAEE…GTKL), 90–115 (PPKY…GKDE), and 297–327 (WGST…RRDK). A C2H2-type; atypical zinc finger spans residues 402 to 421 (CRICEEEVPLFHLEPHSYIC). Residues 670-955 (FEIIKPISRG…AAEVKSHPFF (286 aa)) enclose the Protein kinase domain. Residues 676–684 (ISRGAFGKV) and lysine 699 each bind ATP. Aspartate 793 serves as the catalytic Proton acceptor. Residues 830-850 (ESDVSPRTNSHHFQKNQEEER) form a disordered region. Serine 854 carries the post-translational modification Phosphoserine. One can recognise an AGC-kinase C-terminal domain in the interval 956–1042 (QGVDWENLAL…KLFFLLLCVF (87 aa)).

The protein belongs to the protein kinase superfamily. AGC Ser/Thr protein kinase family.

It catalyses the reaction L-seryl-[protein] + ATP = O-phospho-L-seryl-[protein] + ADP + H(+). The enzyme catalyses L-threonyl-[protein] + ATP = O-phospho-L-threonyl-[protein] + ADP + H(+). The protein is Probable serine/threonine protein kinase IRE4 of Arabidopsis thaliana (Mouse-ear cress).